The sequence spans 245 residues: Tetraspanin-6 (245 aa).

Over 1-19 (MASPSRRLQTKPVITCFKS) the chain is Cytoplasmic. Residues 20–40 (VLLIYTFIFWITGVILLAVGI) traverse the membrane as a helical segment. At 41–59 (WGKVSLENYFSLLNEKATN) the chain is on the extracellular side. The chain crosses the membrane as a helical span at residues 60-80 (VPFVLIATGTVIILLGTFGCF). The Cytoplasmic segment spans residues 81–93 (ATCRASAWMLKLY). Residues 94-114 (AMFLTLVFLVELVAAIVGFVF) traverse the membrane as a helical segment. At 115-208 (RHEIKNSFKN…IKVMTIIESE (94 aa)) the chain is on the extracellular side. The N-linked (GlcNAc...) asparagine glycan is linked to asparagine 134. Residues 209-229 (MGVVAGISFGVACFQLIGIFL) traverse the membrane as a helical segment. Residues 230 to 245 (AYCLSRAITNNQYEIV) are Cytoplasmic-facing.

It belongs to the tetraspanin (TM4SF) family.

The protein resides in the membrane. This chain is Tetraspanin-6 (TSPAN6), found in Homo sapiens (Human).